The following is a 742-amino-acid chain: NAD(P)H-quinone oxidoreductase subunit 5, chloroplastic (742 aa).

A run of 16 helical transmembrane segments spans residues 9–29 (WIIP…LLLI), 40–60 (WAFP…NLAF), 89–109 (IDPL…MVLI), 125–145 (FAYM…SNLI), 147–167 (IYIF…FWFT), 185–205 (GDFG…SFEF), 228–248 (AFLL…HVWL), 256–276 (TPIS…FLVA), 288–308 (IMNI…TLAL), 325–345 (LGYI…FHLI), 352–372 (ALLF…VGYS), 394–414 (TTFL…CFWS), 423–443 (WLYS…TAFY), 544–564 (YPLL…IPLV), 599–619 (FFIN…LAFI), and 720–740 (ISFY…FLFL).

This sequence belongs to the complex I subunit 5 family. NDH is composed of at least 16 different subunits, 5 of which are encoded in the nucleus.

The protein resides in the plastid. Its subcellular location is the chloroplast thylakoid membrane. The enzyme catalyses a plastoquinone + NADH + (n+1) H(+)(in) = a plastoquinol + NAD(+) + n H(+)(out). It carries out the reaction a plastoquinone + NADPH + (n+1) H(+)(in) = a plastoquinol + NADP(+) + n H(+)(out). Its function is as follows. NDH shuttles electrons from NAD(P)H:plastoquinone, via FMN and iron-sulfur (Fe-S) centers, to quinones in the photosynthetic chain and possibly in a chloroplast respiratory chain. The immediate electron acceptor for the enzyme in this species is believed to be plastoquinone. Couples the redox reaction to proton translocation, and thus conserves the redox energy in a proton gradient. This chain is NAD(P)H-quinone oxidoreductase subunit 5, chloroplastic (ndhF), found in Lemna minor (Common duckweed).